A 282-amino-acid polypeptide reads, in one-letter code: NAD(P)H-hydrate epimerase (282 aa).

A mitochondrion-targeting transit peptide spans 1 to 53; sequence MSGLRTLLGLGLLVAGSRLPRVISQQSVCRARPIWWGTQRRGSETMAGAAVKY. Serine 43 carries the post-translational modification Phosphoserine; by PKA. The YjeF N-terminal domain maps to 59 to 269; the sequence is AQAVDQELFN…ALEKKYQLNL (211 aa). Residue 113–117 participates in (6S)-NADPHX binding; the sequence is NNGGD. Residue asparagine 114 participates in K(+) binding. Residue lysine 138 is modified to N6-succinyllysine. Aspartate 179 contacts K(+). Residues 183–189 and aspartate 212 contribute to the (6S)-NADPHX site; that span reads GFSFKGD. Serine 215 contributes to the K(+) binding site.

The protein belongs to the NnrE/AIBP family. As to quaternary structure, homodimer. Interacts with APOA1 and APOA2. Requires K(+) as cofactor. In terms of processing, undergoes physiological phosphorylation during sperm capacitation, downstream to PKA activation. As to expression, detected in testis and sperm (at protein level). Expressed at high levels in heart, liver, kidney, and testis.

It is found in the mitochondrion. The protein localises to the secreted. It catalyses the reaction (6R)-NADHX = (6S)-NADHX. It carries out the reaction (6R)-NADPHX = (6S)-NADPHX. Catalyzes the epimerization of the S- and R-forms of NAD(P)HX, a damaged form of NAD(P)H that is a result of enzymatic or heat-dependent hydration. This is a prerequisite for the S-specific NAD(P)H-hydrate dehydratase to allow the repair of both epimers of NAD(P)HX. Accelerates cholesterol efflux from endothelial cells to high-density lipoprotein (HDL) and thereby regulates angiogenesis. The sequence is that of NAD(P)H-hydrate epimerase from Mus musculus (Mouse).